We begin with the raw amino-acid sequence, 347 residues long: Lipopolysaccharide core heptosyltransferase OpsX (347 aa).

The protein belongs to the glycosyltransferase 9 family.

The protein operates within bacterial outer membrane biogenesis; LPS core biosynthesis. Functionally, catalyzes heptose transfer to the lipopolysaccharide core. It transfers the first L-glycero-D-manno-heptose to the phosphorylated 3-deoxy-alpha-D-manno-octulosonic acid (Kdo-P) of the inner core. The protein is Lipopolysaccharide core heptosyltransferase OpsX of Haemophilus influenzae (strain ATCC 51907 / DSM 11121 / KW20 / Rd).